The chain runs to 195 residues: MIGRGVCCRSFHTAGSAWKQFGFPKTQVTTIYNKTKSASNYKGYLKHRDAPGMYYQPSESIATGSVNSETIPRSFMAASDPRRGLDMPVQSTKAKQCPNVLVGKSTVNGKTYHLGPQEIDEIRKLRLDNPQKYTRKFLAAKYGISPLFVSMVSKPSEQHVQIMESRLQEIQSRWKEKRRIAREDRKRRKLLWYQA.

The transit peptide at 1-18 (MIGRGVCCRSFHTAGSAW) directs the protein to the mitochondrion.

Belongs to the mitochondrion-specific ribosomal protein mL58 family. As to quaternary structure, component of the mitochondrial large ribosomal subunit (mt-LSU). Mature yeast 74S mitochondrial ribosomes consist of a small (37S) and a large (54S) subunit. The 37S small subunit contains a 15S ribosomal RNA (15S mt-rRNA) and 34 different proteins. The 54S large subunit contains a 21S rRNA (21S mt-rRNA) and 46 different proteins.

It localises to the mitochondrion. In terms of biological role, component of the mitochondrial ribosome (mitoribosome), a dedicated translation machinery responsible for the synthesis of mitochondrial genome-encoded proteins, including at least some of the essential transmembrane subunits of the mitochondrial respiratory chain. The mitoribosomes are attached to the mitochondrial inner membrane and translation products are cotranslationally integrated into the membrane. The sequence is that of Large ribosomal subunit protein mL58 (MRPL20) from Saccharomyces cerevisiae (strain ATCC 204508 / S288c) (Baker's yeast).